The primary structure comprises 708 residues: Leukotoxin translocation ATP-binding protein LktB (708 aa).

The Peptidase C39 domain maps to 1–126; the sequence is MEANHQRNDL…ACYQGQLILV (126 aa). The 283-residue stretch at 155 to 437 folds into the ABC transmembrane type-1 domain; the sequence is FLETLIVSIF…LAQLWQDFQQ (283 aa). Transmembrane regions (helical) follow at residues 159-179, 192-212, 270-290, 296-316, and 389-409; these read LIVS…FQVV, LNII…LSGL, ALTS…MWYY, LVIL…SPIL, and VMVI…LSIG. The region spanning 469–704 is the ABC transporter domain; sequence ISFKNIRFRY…SNGLYSYLHQ (236 aa). Residue 503 to 510 coordinates ATP; that stretch reads GRSGSGKS.

The protein belongs to the ABC transporter superfamily. Protein-1 exporter (TC 3.A.1.109) family. As to quaternary structure, homodimer.

Its subcellular location is the cell inner membrane. The enzyme catalyses ATP + H2O + proteinSide 1 = ADP + phosphate + proteinSide 2.. In terms of biological role, part of the ABC transporter complex LktBD involved in leukotoxin export. Transmembrane domains (TMD) form a pore in the inner membrane and the ATP-binding domain (NBD) is responsible for energy generation. This chain is Leukotoxin translocation ATP-binding protein LktB (lktB), found in Mannheimia haemolytica (Pasteurella haemolytica).